Here is a 377-residue protein sequence, read N- to C-terminus: UDP-N-acetylglucosamine--N-acetylmuramyl-(pentapeptide) pyrophosphoryl-undecaprenol N-acetylglucosamine transferase (377 aa).

Residues 11–13 (TGG), N123, R164, S194, and Q295 each bind UDP-N-acetyl-alpha-D-glucosamine.

It belongs to the glycosyltransferase 28 family. MurG subfamily.

The protein localises to the cell inner membrane. It catalyses the reaction di-trans,octa-cis-undecaprenyl diphospho-N-acetyl-alpha-D-muramoyl-L-alanyl-D-glutamyl-meso-2,6-diaminopimeloyl-D-alanyl-D-alanine + UDP-N-acetyl-alpha-D-glucosamine = di-trans,octa-cis-undecaprenyl diphospho-[N-acetyl-alpha-D-glucosaminyl-(1-&gt;4)]-N-acetyl-alpha-D-muramoyl-L-alanyl-D-glutamyl-meso-2,6-diaminopimeloyl-D-alanyl-D-alanine + UDP + H(+). It functions in the pathway cell wall biogenesis; peptidoglycan biosynthesis. Its function is as follows. Cell wall formation. Catalyzes the transfer of a GlcNAc subunit on undecaprenyl-pyrophosphoryl-MurNAc-pentapeptide (lipid intermediate I) to form undecaprenyl-pyrophosphoryl-MurNAc-(pentapeptide)GlcNAc (lipid intermediate II). The polypeptide is UDP-N-acetylglucosamine--N-acetylmuramyl-(pentapeptide) pyrophosphoryl-undecaprenol N-acetylglucosamine transferase (Opitutus terrae (strain DSM 11246 / JCM 15787 / PB90-1)).